The sequence spans 296 residues: Bifunctional protein FolD (296 aa).

NADP(+) contacts are provided by residues 166–168, serine 195, and threonine 236; that span reads GRS.

The protein belongs to the tetrahydrofolate dehydrogenase/cyclohydrolase family. Homodimer.

The catalysed reaction is (6R)-5,10-methylene-5,6,7,8-tetrahydrofolate + NADP(+) = (6R)-5,10-methenyltetrahydrofolate + NADPH. It catalyses the reaction (6R)-5,10-methenyltetrahydrofolate + H2O = (6R)-10-formyltetrahydrofolate + H(+). It functions in the pathway one-carbon metabolism; tetrahydrofolate interconversion. Functionally, catalyzes the oxidation of 5,10-methylenetetrahydrofolate to 5,10-methenyltetrahydrofolate and then the hydrolysis of 5,10-methenyltetrahydrofolate to 10-formyltetrahydrofolate. This Dehalococcoides mccartyi (strain ATCC BAA-2100 / JCM 16839 / KCTC 5957 / BAV1) protein is Bifunctional protein FolD.